The primary structure comprises 64 residues: Large ribosomal subunit protein bL35 (64 aa).

A disordered region spans residues 1–41; it reads MPKMKSHSGASKRFKVSGKGKLLRQQANRRHLLEHKPSRRT.

Belongs to the bacterial ribosomal protein bL35 family.

The chain is Large ribosomal subunit protein bL35 from Nocardia farcinica (strain IFM 10152).